The following is a 104-amino-acid chain: Flagellar hook-basal body complex protein FliE (104 aa).

Belongs to the FliE family.

It is found in the bacterial flagellum basal body. This Salmonella heidelberg (strain SL476) protein is Flagellar hook-basal body complex protein FliE.